We begin with the raw amino-acid sequence, 213 residues long: Uracil phosphoribosyltransferase (213 aa).

Residues R78, R103, and 130 to 138 contribute to the 5-phospho-alpha-D-ribose 1-diphosphate site; that span reads DPMLATGGS. Residues I193 and 198 to 200 contribute to the uracil site; that span reads GDA. Residue D199 coordinates 5-phospho-alpha-D-ribose 1-diphosphate.

This sequence belongs to the UPRTase family. Requires Mg(2+) as cofactor.

The enzyme catalyses UMP + diphosphate = 5-phospho-alpha-D-ribose 1-diphosphate + uracil. It functions in the pathway pyrimidine metabolism; UMP biosynthesis via salvage pathway; UMP from uracil: step 1/1. Allosterically activated by GTP. Catalyzes the conversion of uracil and 5-phospho-alpha-D-ribose 1-diphosphate (PRPP) to UMP and diphosphate. The chain is Uracil phosphoribosyltransferase from Bordetella bronchiseptica (strain ATCC BAA-588 / NCTC 13252 / RB50) (Alcaligenes bronchisepticus).